We begin with the raw amino-acid sequence, 327 residues long: Ribonucleoside-diphosphate reductase small chain (327 aa).

D70, E101, and H104 together coordinate Fe cation. Residue Y108 is part of the active site. Fe cation is bound by residues E164, E198, and H201.

It belongs to the ribonucleoside diphosphate reductase small chain family. In terms of assembly, heterotetramer composed of a homodimer of the large subunit (R1) and a homodimer of the small subunit (R2). Larger multisubunit protein complex are also active, composed of (R1)n(R2)n. Fe cation serves as cofactor.

It carries out the reaction a 2'-deoxyribonucleoside 5'-diphosphate + [thioredoxin]-disulfide + H2O = a ribonucleoside 5'-diphosphate + [thioredoxin]-dithiol. In terms of biological role, ribonucleoside-diphosphate reductase holoenzyme provides the precursors necessary for viral DNA synthesis. Allows virus growth in non-dividing cells. Catalyzes the biosynthesis of deoxyribonucleotides from the corresponding ribonucleotides. The sequence is that of Ribonucleoside-diphosphate reductase small chain from Ornithodoros (relapsing fever ticks).